Consider the following 127-residue polypeptide: Fluoride-specific ion channel FluC (127 aa).

The next 4 membrane-spanning stretches (helical) occupy residues leucine 4 to methionine 24, leucine 35 to phenylalanine 55, threonine 71 to leucine 91, and valine 103 to alanine 123. 2 residues coordinate Na(+): glycine 75 and threonine 78.

Belongs to the fluoride channel Fluc/FEX (TC 1.A.43) family.

It is found in the cell inner membrane. The enzyme catalyses fluoride(in) = fluoride(out). Its activity is regulated as follows. Na(+) is not transported, but it plays an essential structural role and its presence is essential for fluoride channel function. Functionally, fluoride-specific ion channel. Important for reducing fluoride concentration in the cell, thus reducing its toxicity. The protein is Fluoride-specific ion channel FluC of Escherichia coli O81 (strain ED1a).